The following is a 419-amino-acid chain: MPLFALGINHQTASVALREKVAFSADLLLDAYQALLAQPTVLEAVIVSTCNRTEIYCHLKQDNCDEVIKWLCSFHQIEDHKLRPSLYCYSEYQAIQHLFRVSCGLDSLVLGEPQILGQIKQAFATAKQAKGVDKIVQKWFQHTFTVAKRVRTETQIGANAISVAFAAVCLAKQIFSDLSQSRVLLIGAGETIELVGKYLIEHQVPNITIANRTLSRAMALVEQFDAQAITLGEIPNHLAQADIIISSTASPLPIIGKGMVERALKARRNRPMLFIDIAVPRDIEAEVSELRDIYLYSVDDLQGIIEENKQARQVAALEAEKIIDGCIVDFISWIESLKAVESIRTYRQNSEQLRDDLLNRASAALQNGEEAENVLKELAFKLTNKLIHHPSLALNETARSGNDDELILLRNALGLSKKD.

Residues 49-52 (TCNR), Ser107, 112-114 (EPQ), and Gln118 contribute to the substrate site. The Nucleophile role is filled by Cys50. Residue 187 to 192 (GAGETI) participates in NADP(+) binding.

It belongs to the glutamyl-tRNA reductase family. As to quaternary structure, homodimer.

It catalyses the reaction (S)-4-amino-5-oxopentanoate + tRNA(Glu) + NADP(+) = L-glutamyl-tRNA(Glu) + NADPH + H(+). It functions in the pathway porphyrin-containing compound metabolism; protoporphyrin-IX biosynthesis; 5-aminolevulinate from L-glutamyl-tRNA(Glu): step 1/2. Catalyzes the NADPH-dependent reduction of glutamyl-tRNA(Glu) to glutamate 1-semialdehyde (GSA). This Psychromonas ingrahamii (strain DSM 17664 / CCUG 51855 / 37) protein is Glutamyl-tRNA reductase.